The primary structure comprises 560 residues: MSLSKEVPSFRWTQSLRRELSSYTQQTKTLVLKDAKMIADSLDFNQVSQVQRVLRKAKRSDADLDKLRDLNQEVDKLMVMKSVQKNTILKLGDLGKDELMDLATDLEKLKRKIGDSGRDGPRPYMGNLTQSQLDKRTQILRVLGFQQQTGVSRGVVRLWDVSNPAKLNNQFGSMPALTIACMTVQGGETMNNVVQALTSLGLLYTVKYPNLEDLEKLTQEHDCLQIITRDESAVNISGYNFSLSAAVKAGASLIDGGNMLETIRVTPNNFSSIIKATLTAKRKENMFVDERPGNRNPYENLLYKVCLSGEGWPYIGSRSQINGRSWDNTSVDLNPKPDPGPRAPEKNGQNLRLSNLTEMQEAVIKEAMQKLDPTNTIWMDIEGPPTDPVELAVFQPTSGYYFHCFRKPHDEKGFKNGSRHSHGILLKDLEDAQPGLLSYILGLLPQNIVITTQGADDIRKLLDVHGRKDIKLVDVRLTNEQSRIFEQQVWERYNSLCRAHNGVIVPKKKNKESNIQKEPHCALLDCIMFQSVLDGHLPDTSLKPLLPDNLVHQAKPAFVM.

The segment at L54 to I236 is binding site for the cap structure m7GTP. Residues G323–D332 show a composition bias toward polar residues. Residues G323–Q349 form a disordered region. 2 residues coordinate Mn(2+): D380 and E382. E390, C497, H500, and C521 together coordinate Zn(2+). A Mn(2+)-binding site is contributed by D525.

The protein belongs to the arenaviridae nucleocapsid protein family. In terms of assembly, homomultimerizes to form the nucleocapsid. Binds to viral genomic RNA. Interacts with glycoprotein G2. Interacts with protein Z; this interaction probably directs the encapsidated genome to budding sites. Interacts with protein L; this interaction does not interfere with Z-L interaction. Interacts with host IKBKE (via Protein kinase domain); the interaction inhibits IKBKE kinase activity.

The protein localises to the virion. The protein resides in the host cytoplasm. Its function is as follows. Encapsidates the genome, protecting it from nucleases. The encapsidated genomic RNA is termed the nucleocapsid (NC). Serves as template for viral transcription and replication. The increased presence of protein N in host cell does not seem to trigger the switch from transcription to replication as observed in other negative strain RNA viruses. Through the interaction with host IKBKE, strongly inhibits the phosphorylation and nuclear translocation of host IRF3, a protein involved in interferon activation pathway, leading to the inhibition of interferon-beta and IRF3-dependent promoters activation. Also encodes a functional 3'-5' exoribonuclease that degrades preferentially dsRNA substrates and thereby participates in the suppression of interferon induction. This is Nucleoprotein from Cupixi mammarenavirus (isolate Rat/Brasil/BeAn 119303/1970) (CPXV).